The following is a 332-amino-acid chain: Nucleoid-associated protein VP2128 (332 aa).

It belongs to the YejK family.

The protein localises to the cytoplasm. Its subcellular location is the nucleoid. In Vibrio parahaemolyticus serotype O3:K6 (strain RIMD 2210633), this protein is Nucleoid-associated protein VP2128.